The chain runs to 176 residues: ATP synthase subunit b, chloroplastic (176 aa).

A helical transmembrane segment spans residues 19 to 39 (LDLLETNIINIFILIIILIYL).

The protein belongs to the ATPase B chain family. In terms of assembly, F-type ATPases have 2 components, F(1) - the catalytic core - and F(0) - the membrane proton channel. F(1) has five subunits: alpha(3), beta(3), gamma(1), delta(1), epsilon(1). F(0) has four main subunits: a(1), b(1), b'(1) and c(10-14). The alpha and beta chains form an alternating ring which encloses part of the gamma chain. F(1) is attached to F(0) by a central stalk formed by the gamma and epsilon chains, while a peripheral stalk is formed by the delta, b and b' chains.

It localises to the plastid. It is found in the chloroplast thylakoid membrane. Its function is as follows. F(1)F(0) ATP synthase produces ATP from ADP in the presence of a proton or sodium gradient. F-type ATPases consist of two structural domains, F(1) containing the extramembraneous catalytic core and F(0) containing the membrane proton channel, linked together by a central stalk and a peripheral stalk. During catalysis, ATP synthesis in the catalytic domain of F(1) is coupled via a rotary mechanism of the central stalk subunits to proton translocation. Functionally, component of the F(0) channel, it forms part of the peripheral stalk, linking F(1) to F(0). The sequence is that of ATP synthase subunit b, chloroplastic from Galdieria sulphuraria (Red alga).